Consider the following 130-residue polypeptide: Small ribosomal subunit protein uS9 (130 aa).

It belongs to the universal ribosomal protein uS9 family.

This chain is Small ribosomal subunit protein uS9, found in Saccharophagus degradans (strain 2-40 / ATCC 43961 / DSM 17024).